The primary structure comprises 184 residues: Ras-related protein RabN2 (184 aa).

3-10 is a GTP binding site; it reads GDYRSGKT. Positions 25 to 32 match the Effector region motif; that stretch reads TNPSTFDY. Residues 50–54 and 117–120 contribute to the GTP site; these read DTAGH and TKSD.

The protein belongs to the small GTPase superfamily. Rab family.

In Dictyostelium discoideum (Social amoeba), this protein is Ras-related protein RabN2 (rabN2).